Consider the following 561-residue polypeptide: Foot protein 1 variant 1 (561 aa).

An N-terminal signal peptide occupies residues 1–20 (MARNMNILTLFAVLIGSASA). Tyr-22 is subject to 3',4'-dihydroxyphenylalanine. Pro-33 bears the 4-hydroxyproline mark. One copy of the A-1; approximate repeat lies at 41–50 (VHPPAWTAWK). Residues 41–410 (VHPPAWTAWK…APPPAWTAWK (370 aa)) are 13 X 10 AA A-P-P-P-A-W-T-A-W-K. 4 positions are modified to 7'-hydroxytryptophan: Trp-46, Trp-49, Trp-56, and Trp-59. Trp-46, Trp-49, Trp-56, and Trp-59 each carry a C-linked (Man) hydroxytryptophan glycan. Residues 51–60 (AHPPAWTAWK) form an A-2; approximate repeat. One copy of the B-1 repeat lies at 61-70 (ATPKPWTAWK). The segment at 61-440 (ATPKPWTAWK…ATPKPWTAWR (380 aa)) is 27 X 10 AA A-T-P-K-P-W-T-A-W-K. At Pro-65 the chain carries 4-hydroxyproline. A glycan (C-linked (Man) tryptophan) is linked at Trp-66. Residue Trp-69 is modified to 7'-hydroxytryptophan. Residue Trp-69 is glycosylated (C-linked (Man) hydroxytryptophan). The stretch at 71-80 (APPPAWTAWK) is one A-3 repeat. 4-hydroxyproline is present on residues Pro-72, Pro-73, and Pro-74. Residues Trp-76 and Trp-79 each carry the 7'-hydroxytryptophan modification. Trp-76 and Trp-79 each carry a C-linked (Man) hydroxytryptophan glycan. The B-2 repeat unit spans residues 81 to 90 (ATPKPWTAWK). Position 85 is a 4-hydroxyproline (Pro-85). The C-linked (Man) tryptophan glycan is linked to Trp-86. At Trp-89 the chain carries 7'-hydroxytryptophan. C-linked (Man) hydroxytryptophan glycosylation occurs at Trp-89. An A-4; approximate repeat occupies 91–100 (APPPTWTAWK). Residues Pro-92, Pro-93, and Pro-94 each carry the 4-hydroxyproline modification. A 7'-hydroxytryptophan mark is found at Trp-96 and Trp-99. Trp-96 and Trp-99 each carry a C-linked (Man) hydroxytryptophan glycan. The stretch at 101–110 (ATPKPWTAWK) is one B-3 repeat. The residue at position 105 (Pro-105) is a 4-hydroxyproline. Trp-106 carries a C-linked (Man) tryptophan glycan. Trp-109 bears the 7'-hydroxytryptophan mark. C-linked (Man) hydroxytryptophan glycosylation is present at Trp-109. The A-5 repeat unit spans residues 111 to 120 (APPPAWTAWK). Residues Pro-112, Pro-113, and Pro-114 each carry the 4-hydroxyproline modification. 7'-hydroxytryptophan is present on residues Trp-116 and Trp-119. C-linked (Man) hydroxytryptophan glycans are attached at residues Trp-116 and Trp-119. Residues 121–130 (ATLKPWTAWK) form a B-4; approximate repeat. The residue at position 125 (Pro-125) is a 4-hydroxyproline. Residue Trp-126 is glycosylated (C-linked (Man) tryptophan). 7'-hydroxytryptophan is present on Trp-129. A glycan (C-linked (Man) hydroxytryptophan) is linked at Trp-129. The B-5 repeat unit spans residues 131–140 (ATPKPWTAWK). A 4-hydroxyproline modification is found at Pro-135. A C-linked (Man) tryptophan glycan is attached at Trp-136. Trp-139 is subject to 7'-hydroxytryptophan. C-linked (Man) hydroxytryptophan glycosylation occurs at Trp-139. The B-6 repeat unit spans residues 141 to 150 (ATPKPWTAWK). Pro-145 carries the 4-hydroxyproline modification. C-linked (Man) tryptophan glycosylation is present at Trp-146. Trp-149 carries the post-translational modification 7'-hydroxytryptophan. Trp-149 carries C-linked (Man) hydroxytryptophan glycosylation. One copy of the B-7 repeat lies at 151 to 160 (ATPKPWTAWK). Position 155 is a 4-hydroxyproline (Pro-155). Trp-156 is a glycosylation site (C-linked (Man) tryptophan). Trp-159 bears the 7'-hydroxytryptophan mark. A glycan (C-linked (Man) hydroxytryptophan) is linked at Trp-159. A B-8 repeat occupies 161–170 (ATPKPWTAWK). A 4-hydroxyproline modification is found at Pro-165. Trp-166 carries a C-linked (Man) tryptophan glycan. Position 169 is a 7'-hydroxytryptophan (Trp-169). A C-linked (Man) hydroxytryptophan glycan is attached at Trp-169. Residues 171–180 (ATPKPWTVWK) form a B-9; approximate repeat. Pro-175 carries the post-translational modification 4-hydroxyproline. Trp-176 is a glycosylation site (C-linked (Man) tryptophan). Position 179 is a 7'-hydroxytryptophan (Trp-179). Trp-179 carries C-linked (Man) hydroxytryptophan glycosylation. The stretch at 181-190 (ATPKPWTAWK) is one B-10 repeat. Pro-185 carries the 4-hydroxyproline modification. A glycan (C-linked (Man) tryptophan) is linked at Trp-186. Trp-189 carries the post-translational modification 7'-hydroxytryptophan. Trp-189 carries a C-linked (Man) hydroxytryptophan glycan. The stretch at 191–200 (ATPKPWTAWK) is one B-11 repeat. At Pro-195 the chain carries 4-hydroxyproline. C-linked (Man) tryptophan glycosylation occurs at Trp-196. Trp-199 carries the 7'-hydroxytryptophan modification. Trp-199 carries C-linked (Man) hydroxytryptophan glycosylation. An A-6; approximate repeat occupies 201 to 210 (APPPAWSAWK). Residues Pro-202, Pro-203, and Pro-204 each carry the 4-hydroxyproline modification. 7'-hydroxytryptophan occurs at positions 206 and 209. C-linked (Man) hydroxytryptophan glycosylation is found at Trp-206 and Trp-209. One copy of the B-12; approximate repeat lies at 211 to 220 (ATPKPWTVWK). At Pro-215 the chain carries 4-hydroxyproline. The C-linked (Man) tryptophan glycan is linked to Trp-216. A 7'-hydroxytryptophan modification is found at Trp-219. Trp-219 is a glycosylation site (C-linked (Man) hydroxytryptophan). Residues 221–230 (ATPKPWTAWK) form a B-13 repeat. Residue Pro-225 is modified to 4-hydroxyproline. Residue Trp-226 is glycosylated (C-linked (Man) tryptophan). Position 229 is a 7'-hydroxytryptophan (Trp-229). A C-linked (Man) hydroxytryptophan glycan is attached at Trp-229. The B-14 repeat unit spans residues 231-240 (ATPKPWTAWK). At Pro-235 the chain carries 4-hydroxyproline. C-linked (Man) tryptophan glycosylation is present at Trp-236. At Trp-239 the chain carries 7'-hydroxytryptophan. Trp-239 carries C-linked (Man) hydroxytryptophan glycosylation. The B-15; approximate repeat unit spans residues 241 to 250 (ATPKPWTVWK). Pro-245 is subject to 4-hydroxyproline. Trp-246 is a glycosylation site (C-linked (Man) tryptophan). At Trp-249 the chain carries 7'-hydroxytryptophan. Trp-249 is a glycosylation site (C-linked (Man) hydroxytryptophan). One copy of the B-16 repeat lies at 251 to 260 (ATPKPWTAWK). Pro-255 bears the 4-hydroxyproline mark. Trp-256 is a glycosylation site (C-linked (Man) tryptophan). Trp-259 is subject to 7'-hydroxytryptophan. The C-linked (Man) hydroxytryptophan glycan is linked to Trp-259. An A-7 repeat occupies 261–270 (APPPAWTAWK). 3 positions are modified to 4-hydroxyproline: Pro-262, Pro-263, and Pro-264. Residues Trp-266 and Trp-269 each carry the 7'-hydroxytryptophan modification. C-linked (Man) hydroxytryptophan glycans are attached at residues Trp-266 and Trp-269. The B-17 repeat unit spans residues 271-280 (ATPKPWTAWK). Pro-275 is modified (4-hydroxyproline). A glycan (C-linked (Man) tryptophan) is linked at Trp-276. Trp-279 is modified (7'-hydroxytryptophan). Trp-279 is a glycosylation site (C-linked (Man) hydroxytryptophan). One copy of the A-8; approximate repeat lies at 281 to 290 (APPPTWTAWK). 4-hydroxyproline is present on residues Pro-282, Pro-283, and Pro-284. Trp-286 and Trp-289 each carry 7'-hydroxytryptophan. C-linked (Man) hydroxytryptophan glycosylation is found at Trp-286 and Trp-289. One copy of the B-18 repeat lies at 291-300 (ATPKPWTAWK). A 4-hydroxyproline modification is found at Pro-295. Trp-296 is a glycosylation site (C-linked (Man) tryptophan). Trp-299 carries the 7'-hydroxytryptophan modification. A C-linked (Man) hydroxytryptophan glycan is attached at Trp-299. Residues 301 to 310 (APPPAWSAWK) form an A-9; approximate repeat. A 4-hydroxyproline mark is found at Pro-302, Pro-303, and Pro-304. 7'-hydroxytryptophan occurs at positions 306 and 309. C-linked (Man) hydroxytryptophan glycosylation is found at Trp-306 and Trp-309. The stretch at 311-320 (ATPKPWTAWK) is one B-19 repeat. At Pro-315 the chain carries 4-hydroxyproline. C-linked (Man) tryptophan glycosylation occurs at Trp-316. Position 319 is a 7'-hydroxytryptophan (Trp-319). C-linked (Man) hydroxytryptophan glycosylation is present at Trp-319. The B-20 repeat unit spans residues 321–330 (ATPKPWTAWK). 4-hydroxyproline is present on Pro-325. Trp-326 is a glycosylation site (C-linked (Man) tryptophan). Trp-329 carries the post-translational modification 7'-hydroxytryptophan. Residue Trp-329 is glycosylated (C-linked (Man) hydroxytryptophan). The stretch at 331–340 (ATPKPWTAWK) is one B-21 repeat. Pro-335 carries the post-translational modification 4-hydroxyproline. Trp-336 is a glycosylation site (C-linked (Man) tryptophan). At Trp-339 the chain carries 7'-hydroxytryptophan. Trp-339 is a glycosylation site (C-linked (Man) hydroxytryptophan). Residues 341 to 350 (ATPKPWTAWK) form a B-22 repeat. Pro-345 carries the 4-hydroxyproline modification. C-linked (Man) tryptophan glycosylation is present at Trp-346. The residue at position 349 (Trp-349) is a 7'-hydroxytryptophan. Trp-349 carries a C-linked (Man) hydroxytryptophan glycan. The A-10; approximate repeat unit spans residues 351 to 360 (VPPPAWTAWK). 3 positions are modified to 4-hydroxyproline: Pro-352, Pro-353, and Pro-354. 4 positions are modified to 7'-hydroxytryptophan: Trp-356, Trp-359, Trp-366, and Trp-369. 4 C-linked (Man) hydroxytryptophan glycosylation sites follow: Trp-356, Trp-359, Trp-366, and Trp-369. The A-11; approximate repeat unit spans residues 361-370 (AHPPAWTAWK). The B-23 repeat unit spans residues 371–380 (ATPKPWTAWK). Residue Pro-375 is modified to 4-hydroxyproline. Trp-376 carries a C-linked (Man) tryptophan glycan. 7'-hydroxytryptophan is present on Trp-379. Trp-379 is a glycosylation site (C-linked (Man) hydroxytryptophan). An A-12 repeat occupies 381–390 (APPPAWTAWK). Pro-382, Pro-383, and Pro-384 each carry 4-hydroxyproline. 2 positions are modified to 7'-hydroxytryptophan: Trp-386 and Trp-389. 2 C-linked (Man) hydroxytryptophan glycosylation sites follow: Trp-386 and Trp-389. One copy of the B-24 repeat lies at 391-400 (ATPKPWTAWK). Residue Pro-395 is modified to 4-hydroxyproline. The C-linked (Man) tryptophan glycan is linked to Trp-396. 7'-hydroxytryptophan is present on Trp-399. A glycan (C-linked (Man) hydroxytryptophan) is linked at Trp-399. The stretch at 401-410 (APPPAWTAWK) is one A-13 repeat. 4-hydroxyproline is present on residues Pro-402, Pro-403, and Pro-404. 2 positions are modified to 7'-hydroxytryptophan: Trp-406 and Trp-409. Trp-406 and Trp-409 each carry a C-linked (Man) hydroxytryptophan glycan. The B-25 repeat unit spans residues 411 to 420 (ATPKPWTAWK). Pro-415 is subject to 4-hydroxyproline. Trp-416 carries a C-linked (Man) tryptophan glycan. Trp-419 carries the 7'-hydroxytryptophan modification. A glycan (C-linked (Man) hydroxytryptophan) is linked at Trp-419. One copy of the B-26; approximate repeat lies at 421 to 430 (ATPKPWTVWK). Residue Pro-425 is modified to 4-hydroxyproline. C-linked (Man) tryptophan glycosylation occurs at Trp-426. Trp-429 is modified (7'-hydroxytryptophan). Trp-429 carries C-linked (Man) hydroxytryptophan glycosylation. A B-27; approximate repeat occupies 431-440 (ATPKPWTAWR). Pro-435 carries the 4-hydroxyproline modification. Residue Trp-436 is glycosylated (C-linked (Man) tryptophan). A 7'-hydroxytryptophan modification is found at Trp-439. Trp-439 carries C-linked (Man) hydroxytryptophan glycosylation. The disordered stretch occupies residues 452-507 (GHGYGGYGKPGKPGKPGSKGPRGPAGPPGATGKTGRTGATGKRGPPGYPGKPGVPG). Residues 453–462 (HGYGGYGKPG) show a composition bias toward gly residues. The region spanning 459-510 (GKPGKPGKPGSKGPRGPAGPPGATGKTGRTGATGKRGPPGYPGKPGVPGRNG) is the Collagen-like domain. A compositionally biased stretch (low complexity) spans 466-496 (KPGSKGPRGPAGPPGATGKTGRTGATGKRGP). 4-hydroxyproline occurs at positions 497, 500, and 506.

As to expression, produced by the byssal gland.

The protein localises to the secreted. In terms of biological role, provides adhesiveness to the mussel's foot. Mussels produce one of the strongest water insoluble glues. The mussel's adhesive is a bundle of threads, called a byssus, formed by a fibrous collagenous core coated with adhesive proteins. This is Foot protein 1 variant 1 from Perna viridis (Asian green mussel).